Reading from the N-terminus, the 535-residue chain is Dual specificity mitogen-activated protein kinase kinase 7 (535 aa).

Ala-2 bears the N-acetylalanine mark. A coiled-coil region spans residues 2–30 (AASSLEQKLSRLEAKLKQENREARRRIDL). The interval 37-73 (QRPRPIIVITLSPAPAPSQRAALQLPLANDGGSRSPS) is d domain. The disordered stretch occupies residues 63–93 (LANDGGSRSPSSESSPQHPTPPTRPRHMLGL). Over residues 69-79 (SRSPSSESSPQ) the composition is skewed to low complexity. Residues 136–396 (LENLGEMGSG…YNKLLEHSFI (261 aa)) enclose the Protein kinase domain. Residues 142-150 (MGSGTCGQV) and Lys-165 contribute to the ATP site. The active-site Proton acceptor is Asp-259. Ser-287 is modified (phosphoserine; by MAP3K). Thr-291 is modified (phosphothreonine; by MAP3K). The tract at residues 393–416 (HSFIKHYEILEVDVASWFKDVMAK) is DVD domain. Ser-427 carries the phosphoserine modification.

This sequence belongs to the protein kinase superfamily. STE Ser/Thr protein kinase family. MAP kinase kinase subfamily. In terms of assembly, interacts with RASSF7, the interaction promotes phosphorylation. Interacts with VRK2. Interacts (via its D domain) with its substrates MAPK8/JNK1, MAPK9/JNK2 and MAPK10/JNK3. Interacts (via its DVD domain) with MAP3Ks activators like MAP3K5/ASK1 and MAP3K1/MEKK1. Interacts with SH3RF1, MAPK8IP1/JIP1, MAPK8IP2/JIP2 and MAPK8IP3/JIP3 scaffold proteins. Found in a complex with SH3RF1, RAC1, MAP3K11/MLK3, MAPK8IP1/JIP1 and MAPK8/JNK1. Found in a complex with SH3RF1, RAC2, MAP3K7/TAK1, MAPK8IP1/JIP1, MAPK8/JNK1 and MAPK9/JNK2. Requires Mg(2+) as cofactor. In terms of processing, activated by phosphorylation on Ser-287 and Thr-291 by MAP kinase kinase kinases (MAP3Ks). As to expression, expressed at high levels in brain, lung, liver, skeletal muscle, kidney, and testis and at lower levels in the heart and spleen.

Its subcellular location is the nucleus. The protein resides in the cytoplasm. It carries out the reaction L-seryl-[protein] + ATP = O-phospho-L-seryl-[protein] + ADP + H(+). The enzyme catalyses L-threonyl-[protein] + ATP = O-phospho-L-threonyl-[protein] + ADP + H(+). It catalyses the reaction L-tyrosyl-[protein] + ATP = O-phospho-L-tyrosyl-[protein] + ADP + H(+). Activated by phosphorylation by specific MAP kinase kinase kinases such as MAP3K1/MEKK1, MAP3K3/MEKK3, MAP3K11/MLK3 and MAP3K12/DLK. Isoforms 3 and 4 have lower basal activity but a higher level of inducible activation, than isoforms 2, 6, 7 and 8. Its function is as follows. Dual specificity protein kinase which acts as an essential component of the MAP kinase signal transduction pathway. Essential component of the stress-activated protein kinase/c-Jun N-terminal kinase (SAP/JNK) signaling pathway. With MAP2K4/MKK4, is the one of the only known kinase to directly activate the stress-activated protein kinase/c-Jun N-terminal kinases MAPK8/JNK1, MAPK9/JNK2 and MAPK10/JNK3. MAP2K4/MKK4 and MAP2K7/MKK7 both activate the JNKs by phosphorylation, but they differ in their preference for the phosphorylation site in the Thr-Pro-Tyr motif. MAP2K4/MKK4 shows preference for phosphorylation of the Tyr residue and MAP2K7/MKK7 for the Thr residue. The monophosphorylation of JNKs on the Thr residue is sufficient to increase JNK activity indicating that MAP2K7/MKK7 is important to trigger JNK activity, while the additional phosphorylation of the Tyr residue by MAP2K4/MKK4 ensures optimal JNK activation. Has a specific role in JNK signal transduction pathway activated by pro-inflammatory cytokines. The MKK/JNK signaling pathway is also involved in mitochondrial death signaling pathway, including the release cytochrome c, leading to apoptosis. Part of a non-canonical MAPK signaling pathway, composed of the upstream MAP3K12 kinase and downstream MAP kinases MAPK1/ERK2 and MAPK3/ERK1, that enhances the AP-1-mediated transcription of APP in response to APOE. The polypeptide is Dual specificity mitogen-activated protein kinase kinase 7 (Mus musculus (Mouse)).